Consider the following 762-residue polypeptide: 5-methyltetrahydropteroyltriglutamate--homocysteine methyltransferase (762 aa).

5-methyltetrahydropteroyltri-L-glutamate is bound by residues 17–20 (REWK) and Lys-111. Residues 435–437 (IGS) and Glu-488 contribute to the L-homocysteine site. L-methionine-binding positions include 435 to 437 (IGS) and Glu-488. 5-methyltetrahydropteroyltri-L-glutamate is bound by residues 519 to 520 (RC) and Trp-565. Residue Asp-603 coordinates L-homocysteine. L-methionine is bound at residue Asp-603. Glu-609 contributes to the 5-methyltetrahydropteroyltri-L-glutamate binding site. Zn(2+) contacts are provided by His-645, Cys-647, and Glu-669. Catalysis depends on His-698, which acts as the Proton donor. Cys-730 contacts Zn(2+).

This sequence belongs to the vitamin-B12 independent methionine synthase family. Zn(2+) serves as cofactor.

The catalysed reaction is 5-methyltetrahydropteroyltri-L-glutamate + L-homocysteine = tetrahydropteroyltri-L-glutamate + L-methionine. It functions in the pathway amino-acid biosynthesis; L-methionine biosynthesis via de novo pathway; L-methionine from L-homocysteine (MetE route): step 1/1. Catalyzes the transfer of a methyl group from 5-methyltetrahydrofolate to homocysteine resulting in methionine formation. This Bacillus cereus (strain ZK / E33L) protein is 5-methyltetrahydropteroyltriglutamate--homocysteine methyltransferase.